The chain runs to 927 residues: Bifunctional glutamine synthetase adenylyltransferase/adenylyl-removing enzyme (927 aa).

The tract at residues 1–428 (MTMTDASDLL…AQFDQVFADK (428 aa)) is adenylyl removase. The interval 438–927 (DQAAGCIWSG…AALWARVFGA (490 aa)) is adenylyl transferase.

This sequence belongs to the GlnE family. It depends on Mg(2+) as a cofactor.

The catalysed reaction is [glutamine synthetase]-O(4)-(5'-adenylyl)-L-tyrosine + phosphate = [glutamine synthetase]-L-tyrosine + ADP. It carries out the reaction [glutamine synthetase]-L-tyrosine + ATP = [glutamine synthetase]-O(4)-(5'-adenylyl)-L-tyrosine + diphosphate. Involved in the regulation of glutamine synthetase GlnA, a key enzyme in the process to assimilate ammonia. When cellular nitrogen levels are high, the C-terminal adenylyl transferase (AT) inactivates GlnA by covalent transfer of an adenylyl group from ATP to specific tyrosine residue of GlnA, thus reducing its activity. Conversely, when nitrogen levels are low, the N-terminal adenylyl removase (AR) activates GlnA by removing the adenylyl group by phosphorolysis, increasing its activity. The regulatory region of GlnE binds the signal transduction protein PII (GlnB) which indicates the nitrogen status of the cell. The sequence is that of Bifunctional glutamine synthetase adenylyltransferase/adenylyl-removing enzyme from Burkholderia pseudomallei (strain K96243).